A 420-amino-acid chain; its full sequence is Innexin-3 (420 aa).

The next 4 helical transmembrane spans lie at 33–53 (ATLLAFFSIMVSCKQYVGSAI), 104–124 (WVPIVLAIQAFMFYLPSWIWS), 193–213 (MLYICIKLMYLANVFVQFIIL), and 278–298 (IYLFIWFWFVFVLITTFINTL). The disordered stretch occupies residues 378-405 (NRDFHHGHSTKSTSPGLEEGHHEHLYTP). Positions 395–405 (EEGHHEHLYTP) are enriched in basic and acidic residues.

The protein belongs to the pannexin family. Interacts with F-actin. Evenly distributed along the adjoining membranes of the two pm5 pharyngeal muscle cells.

It localises to the cell membrane. It is found in the cell junction. The protein resides in the gap junction. In terms of biological role, structural component of gap junctions. Plays a role in maintaining gap junction activity to promote phayngeal muscle contraction. This Caenorhabditis elegans protein is Innexin-3.